We begin with the raw amino-acid sequence, 719 residues long: Phosphoribosylformylglycinamidine synthase subunit PurL (719 aa).

The active site involves H45. Residues Y48 and K87 each contribute to the ATP site. Residue E89 participates in Mg(2+) binding. Substrate contacts are provided by residues 90–93 (SHNH) and R112. Residue H91 is the Proton acceptor of the active site. Residue D113 participates in Mg(2+) binding. Q236 lines the substrate pocket. Residue D264 coordinates Mg(2+). Residue 308-310 (ESQ) coordinates substrate. N493 and G530 together coordinate ATP. N531 contacts Mg(2+). S533 contacts substrate.

The protein belongs to the FGAMS family. In terms of assembly, monomer. Part of the FGAM synthase complex composed of 1 PurL, 1 PurQ and 2 PurS subunits.

The protein localises to the cytoplasm. The enzyme catalyses N(2)-formyl-N(1)-(5-phospho-beta-D-ribosyl)glycinamide + L-glutamine + ATP + H2O = 2-formamido-N(1)-(5-O-phospho-beta-D-ribosyl)acetamidine + L-glutamate + ADP + phosphate + H(+). The protein operates within purine metabolism; IMP biosynthesis via de novo pathway; 5-amino-1-(5-phospho-D-ribosyl)imidazole from N(2)-formyl-N(1)-(5-phospho-D-ribosyl)glycinamide: step 1/2. Its function is as follows. Part of the phosphoribosylformylglycinamidine synthase complex involved in the purines biosynthetic pathway. Catalyzes the ATP-dependent conversion of formylglycinamide ribonucleotide (FGAR) and glutamine to yield formylglycinamidine ribonucleotide (FGAM) and glutamate. The FGAM synthase complex is composed of three subunits. PurQ produces an ammonia molecule by converting glutamine to glutamate. PurL transfers the ammonia molecule to FGAR to form FGAM in an ATP-dependent manner. PurS interacts with PurQ and PurL and is thought to assist in the transfer of the ammonia molecule from PurQ to PurL. This Novosphingobium aromaticivorans (strain ATCC 700278 / DSM 12444 / CCUG 56034 / CIP 105152 / NBRC 16084 / F199) protein is Phosphoribosylformylglycinamidine synthase subunit PurL.